Reading from the N-terminus, the 155-residue chain is 6,7-dimethyl-8-ribityllumazine synthase (155 aa).

Residues tryptophan 22, 56–58 (SYE), and 80–82 (AVI) contribute to the 5-amino-6-(D-ribitylamino)uracil site. 85-86 (DT) is a (2S)-2-hydroxy-3-oxobutyl phosphate binding site. Histidine 88 functions as the Proton donor in the catalytic mechanism. Phenylalanine 113 contacts 5-amino-6-(D-ribitylamino)uracil. Position 127 (arginine 127) interacts with (2S)-2-hydroxy-3-oxobutyl phosphate.

The protein belongs to the DMRL synthase family.

The enzyme catalyses (2S)-2-hydroxy-3-oxobutyl phosphate + 5-amino-6-(D-ribitylamino)uracil = 6,7-dimethyl-8-(1-D-ribityl)lumazine + phosphate + 2 H2O + H(+). It functions in the pathway cofactor biosynthesis; riboflavin biosynthesis; riboflavin from 2-hydroxy-3-oxobutyl phosphate and 5-amino-6-(D-ribitylamino)uracil: step 1/2. Its function is as follows. Catalyzes the formation of 6,7-dimethyl-8-ribityllumazine by condensation of 5-amino-6-(D-ribitylamino)uracil with 3,4-dihydroxy-2-butanone 4-phosphate. This is the penultimate step in the biosynthesis of riboflavin. The polypeptide is 6,7-dimethyl-8-ribityllumazine synthase (Deinococcus radiodurans (strain ATCC 13939 / DSM 20539 / JCM 16871 / CCUG 27074 / LMG 4051 / NBRC 15346 / NCIMB 9279 / VKM B-1422 / R1)).